Reading from the N-terminus, the 557-residue chain is Dihydroxy-acid dehydratase (557 aa).

Asp-78 lines the Mg(2+) pocket. Cys-119 contributes to the [2Fe-2S] cluster binding site. Asp-120 and Lys-121 together coordinate Mg(2+). Lys-121 is subject to N6-carboxylysine. Residue Cys-192 coordinates [2Fe-2S] cluster. Glu-442 provides a ligand contact to Mg(2+). Catalysis depends on Ser-468, which acts as the Proton acceptor.

It belongs to the IlvD/Edd family. In terms of assembly, homodimer. [2Fe-2S] cluster serves as cofactor. The cofactor is Mg(2+).

It catalyses the reaction (2R)-2,3-dihydroxy-3-methylbutanoate = 3-methyl-2-oxobutanoate + H2O. The enzyme catalyses (2R,3R)-2,3-dihydroxy-3-methylpentanoate = (S)-3-methyl-2-oxopentanoate + H2O. It functions in the pathway amino-acid biosynthesis; L-isoleucine biosynthesis; L-isoleucine from 2-oxobutanoate: step 3/4. The protein operates within amino-acid biosynthesis; L-valine biosynthesis; L-valine from pyruvate: step 3/4. Its function is as follows. Functions in the biosynthesis of branched-chain amino acids. Catalyzes the dehydration of (2R,3R)-2,3-dihydroxy-3-methylpentanoate (2,3-dihydroxy-3-methylvalerate) into 2-oxo-3-methylpentanoate (2-oxo-3-methylvalerate) and of (2R)-2,3-dihydroxy-3-methylbutanoate (2,3-dihydroxyisovalerate) into 2-oxo-3-methylbutanoate (2-oxoisovalerate), the penultimate precursor to L-isoleucine and L-valine, respectively. This chain is Dihydroxy-acid dehydratase, found in Bacillus cereus (strain 03BB102).